The primary structure comprises 456 residues: Cysteine--tRNA ligase (456 aa).

Zn(2+) is bound at residue Cys29. Residues 31–41 (PTVYDYAHVGN) carry the 'HIGH' region motif. Positions 209, 234, and 238 each coordinate Zn(2+). A 'KMSKS' region motif is present at residues 267 to 271 (KMSKS). Lys270 serves as a coordination point for ATP.

It belongs to the class-I aminoacyl-tRNA synthetase family. Monomer. Zn(2+) is required as a cofactor.

The protein resides in the cytoplasm. The enzyme catalyses tRNA(Cys) + L-cysteine + ATP = L-cysteinyl-tRNA(Cys) + AMP + diphosphate. This Rhodospirillum centenum (strain ATCC 51521 / SW) protein is Cysteine--tRNA ligase.